A 40-amino-acid polypeptide reads, in one-letter code: Metallothionein-1 (40 aa).

It belongs to the metallothionein superfamily. Type 5 family.

Its function is as follows. This protein binds cations of several transition elements. It is thought to be involved in detoxification processes. The protein is Metallothionein-1 (MtnA) of Drosophila melanogaster (Fruit fly).